Consider the following 588-residue polypeptide: Adenine deaminase (588 aa).

It belongs to the metallo-dependent hydrolases superfamily. Adenine deaminase family. In terms of assembly, homodimer. The cofactor is Mn(2+).

The enzyme catalyses adenine + H2O + H(+) = hypoxanthine + NH4(+). The chain is Adenine deaminase from Shigella flexneri.